Here is a 368-residue protein sequence, read N- to C-terminus: Agmatine deiminase (368 aa).

Residue Cys357 is the Amidino-cysteine intermediate of the active site.

Belongs to the agmatine deiminase family. As to quaternary structure, homodimer.

The catalysed reaction is agmatine + H2O = N-carbamoylputrescine + NH4(+). The protein operates within amine and polyamine biosynthesis; putrescine biosynthesis via agmatine pathway; N-carbamoylputrescine from agmatine: step 1/1. Functionally, mediates the hydrolysis of agmatine into N-carbamoylputrescine in the arginine decarboxylase (ADC) pathway of putrescine biosynthesis, a basic polyamine. The chain is Agmatine deiminase from Pseudomonas syringae pv. tomato (strain ATCC BAA-871 / DC3000).